Here is a 538-residue protein sequence, read N- to C-terminus: Chaperonin GroEL 1 (538 aa).

Residues 29 to 32, 86 to 90, G413, and D494 contribute to the ATP site; these read TLGP and DGTTT.

It belongs to the chaperonin (HSP60) family. As to quaternary structure, forms a cylinder of 14 subunits composed of two heptameric rings stacked back-to-back. Interacts with the co-chaperonin GroES.

The protein resides in the cytoplasm. The enzyme catalyses ATP + H2O + a folded polypeptide = ADP + phosphate + an unfolded polypeptide.. Together with its co-chaperonin GroES, plays an essential role in assisting protein folding. The GroEL-GroES system forms a nano-cage that allows encapsulation of the non-native substrate proteins and provides a physical environment optimized to promote and accelerate protein folding. The chain is Chaperonin GroEL 1 from Mycolicibacterium paratuberculosis (strain ATCC BAA-968 / K-10) (Mycobacterium paratuberculosis).